Consider the following 388-residue polypeptide: MSTNWRELFPTKLTFVIFLLYMSLFIGQGIFVTASQESNNSYGYNTVTVVLLTEVFKLIVSTCLYCRDNNLRSLVRDVQKDRNVLGLYMVPAFLYCLYNNLAFVNLATFDPTTYYLLLQLRVVVTGILFQIIFKKYLSQRQWISLILLTLGCMMKQVDFGSFYSDANDDSESAAIQQQLQSHNKTTSAETHAHGKNMSGFDFSLSAVFILAQTICSCLAGVYNEYLLKDKGADVNIFVQNVFMYLDSIVCNAVILLLRGELLDAFSPQNLGSIMRFSVLIIIVNNAAIGIVTSFFLKYMNSILKTFASALELLFTAVLCYFLFSIPIYMNTALAIAVVSYAIYLYTQSPVVNLGKVRPLSNLSDATTKSTDKRKLIDEEAAESDLDMV.

A run of 10 helical transmembrane segments spans residues 13 to 33 (LTFV…IFVT), 46 to 66 (TVTV…CLYC), 84 to 104 (VLGL…LAFV), 113 to 133 (TYYL…QIIF), 142 to 162 (WISL…FGSF), 202 to 222 (FSLS…AGVY), 236 to 256 (IFVQ…VILL), 276 to 296 (FSVL…SFFL), 309 to 329 (ALEL…PIYM), and 331 to 351 (TALA…SPVV).

The protein belongs to the nucleotide-sugar transporter family.

It is found in the golgi apparatus membrane. Functionally, UDP-galactose transporter involved in the synthesis of galactose-containing glycans. Plays a role in quiescence of the innate immune response, possibly by regulating glycosylation of the Toll pathway ligand spz. This chain is UDP-galactose transporter senju, found in Drosophila melanogaster (Fruit fly).